The primary structure comprises 273 residues: Embryonic polyadenylate-binding protein 2 (273 aa).

The segment at 22–57 (SSDPEAQGWGAWGRTEKTSLVPRAGSRAGSDKEAEE) is disordered. In terms of domain architecture, RRM spans 143–220 (RSVFVGNVDY…RVIKVLPKRT (78 aa)).

The protein localises to the cytoplasm. Functionally, binds the poly(A) tail of mRNA. This chain is Embryonic polyadenylate-binding protein 2 (Pabpn1l), found in Mus musculus (Mouse).